Here is a 170-residue protein sequence, read N- to C-terminus: 4-hydroxyphenylacetate 3-monooxygenase reductase component (170 aa).

Belongs to the non-flavoprotein flavin reductase family. HpaC subfamily. Homodimer. 4-HPA 3-monooxygenase consists of a reductase component HpaC and an oxygenase component HpaB.

It catalyses the reaction a reduced flavin + NAD(+) = an oxidized flavin + NADH + 2 H(+). It participates in aromatic compound metabolism; 4-hydroxyphenylacetate degradation; pyruvate and succinate semialdehyde from 4-hydroxyphenylacetate: step 1/7. In terms of biological role, catalyzes the reduction of free flavins (FMN, FAD and riboflavin) by NADH. Subsequently, the reduced flavins diffuse to the large HpaB component or to other electron acceptors such as cytochrome c and Fe(3+) ion. In Salmonella typhimurium (strain LT2 / SGSC1412 / ATCC 700720), this protein is 4-hydroxyphenylacetate 3-monooxygenase reductase component (hpaC).